Here is a 194-residue protein sequence, read N- to C-terminus: Probable GTP-binding protein EngB (194 aa).

Residues 22–194 (GKPEIALVGR…SVWEWITAHM (173 aa)) enclose the EngB-type G domain. Residues 30 to 37 (GRSNVGKS), 57 to 61 (GKTQT), 75 to 78 (DVPG), 142 to 145 (TKSD), and 175 to 177 (FSS) each bind GTP. Residues Ser37 and Thr59 each coordinate Mg(2+).

It belongs to the TRAFAC class TrmE-Era-EngA-EngB-Septin-like GTPase superfamily. EngB GTPase family. Mg(2+) serves as cofactor.

In terms of biological role, necessary for normal cell division and for the maintenance of normal septation. The sequence is that of Probable GTP-binding protein EngB from Leuconostoc citreum (strain KM20).